Reading from the N-terminus, the 396-residue chain is MSRPQRISVLGATGSIGLSTLDVVQRHPDRYEAFALTGFSRLAELEALCLRHRPVYAVVPEQAAAIALQGSLAAAGIRTRVLFGEQALCEVASAPEVDMVMAAIVGAAGLPSTLAAVEAGKRVLLANKEALVMSGALFMQAVKRSGAVLLPIDSEHNAIFQSLPRNYADGLERVGVRRILLTASGGPFRETPLEQLASVTPEQACAHPNWSMGRKISVDSASMMNKGLELIEACWLFDAQPSQVEVVIHPQSVIHSMVDYVDGSVIAQLGNPDMRTPISYAMAWPERIDSGVSPLDMFAVGRLDFQRPDEQRFPCLRLASQAAETGGSAPAMLNAANEVAVAAFLERHIRFSDIAVIIEDVLNREAVTAVESLDQVLAADRRARSVAGQWLTRHAG.

Residues Thr13, Gly14, Ser15, Ile16, and Asn127 each coordinate NADPH. Lys128 contributes to the 1-deoxy-D-xylulose 5-phosphate binding site. NADPH is bound at residue Glu129. Asp153 is a Mn(2+) binding site. Ser154, Glu155, Ser184, and His207 together coordinate 1-deoxy-D-xylulose 5-phosphate. Glu155 is a binding site for Mn(2+). Gly213 contacts NADPH. 1-deoxy-D-xylulose 5-phosphate contacts are provided by Ser220, Asn225, Lys226, and Glu229. Glu229 contributes to the Mn(2+) binding site.

This sequence belongs to the DXR family. Mg(2+) serves as cofactor. It depends on Mn(2+) as a cofactor.

It carries out the reaction 2-C-methyl-D-erythritol 4-phosphate + NADP(+) = 1-deoxy-D-xylulose 5-phosphate + NADPH + H(+). It participates in isoprenoid biosynthesis; isopentenyl diphosphate biosynthesis via DXP pathway; isopentenyl diphosphate from 1-deoxy-D-xylulose 5-phosphate: step 1/6. Its activity is regulated as follows. Inhibited by fosmidomycin and 3-(N-acetyl-N-hydroxyamino)-propylphosphonic acid (FR-900098). Its function is as follows. Catalyzes the NADPH-dependent rearrangement and reduction of 1-deoxy-D-xylulose-5-phosphate (DXP) to 2-C-methyl-D-erythritol 4-phosphate (MEP). This is 1-deoxy-D-xylulose 5-phosphate reductoisomerase from Pseudomonas aeruginosa (strain ATCC 15692 / DSM 22644 / CIP 104116 / JCM 14847 / LMG 12228 / 1C / PRS 101 / PAO1).